Consider the following 502-residue polypeptide: RNA-splicing ligase RtcB homolog 2 (502 aa).

Asp120, Cys123, His228, His260, and His354 together coordinate Mn(2+). 227 to 231 is a GMP binding site; it reads NHYAE. Residues 354–355, 403–406, Ser410, and 429–432 each bind GMP; these read HN, GGSM, and HGAG. His429 functions as the GMP-histidine intermediate in the catalytic mechanism.

Belongs to the RtcB family. As to quaternary structure, catalytic component of the tRNA-splicing ligase complex. It depends on Mn(2+) as a cofactor.

The enzyme catalyses a 3'-end 3'-phospho-ribonucleotide-RNA + a 5'-end dephospho-ribonucleoside-RNA + GTP = a ribonucleotidyl-ribonucleotide-RNA + GMP + diphosphate. It carries out the reaction a 3'-end 2',3'-cyclophospho-ribonucleotide-RNA + a 5'-end dephospho-ribonucleoside-RNA + GTP + H2O = a ribonucleotidyl-ribonucleotide-RNA + GMP + diphosphate + H(+). Catalytic subunit of the tRNA-splicing ligase complex that acts by directly joining spliced tRNA halves to mature-sized tRNAs by incorporating the precursor-derived splice junction phosphate into the mature tRNA as a canonical 3',5'-phosphodiester. May act as an RNA ligase with broad substrate specificity, and may function toward other RNAs. The sequence is that of RNA-splicing ligase RtcB homolog 2 from Culex quinquefasciatus (Southern house mosquito).